Here is a 312-residue protein sequence, read N- to C-terminus: Zinc-finger homeodomain protein 9 (312 aa).

The disordered stretch occupies residues 1–27 (MLEVRSMDMTPKSPEPESETPTRIQPA). Serine 13 is subject to Phosphoserine. Residues 52–103 (YKECLKNHAAAIGGHALDGCGEFMPSPSSTPSDPTSLKCAACGCHRNFHRRE) form a ZF-HD dimerization-type; degenerate zinc finger. Disordered stretches follow at residues 128–155 (QPHHRHHPPPPLAPPLPRSPNSSSPPPI) and 253–312 (FSGG…SSSS). The span at 136–155 (PPPLAPPLPRSPNSSSPPPI) shows a compositional bias: pro residues. Positions 192-255 (RKRFRTKFSS…NNKNSFKFSG (64 aa)) form a DNA-binding region, homeobox. Serine 273 carries the post-translational modification Phosphoserine.

As to quaternary structure, homo- and heterodimer with other ZFHD proteins. Interacts with MIF3; this interaction prevents nuclear localization and DNA-binding to inhibit transcription regulation activity. Binds to ZHD1, ZHD2 and ZHD11. As to expression, mostly expressed in flowers, stems and inflorescence and, to a lower extent, in leaves and stems.

Its subcellular location is the nucleus. Functionally, putative transcription factor. This chain is Zinc-finger homeodomain protein 9 (ZHD9), found in Arabidopsis thaliana (Mouse-ear cress).